The chain runs to 179 residues: Inorganic pyrophosphatase (179 aa).

Substrate-binding residues include Lys-30, Arg-44, and Tyr-56. Asp-66, Asp-71, and Asp-103 together coordinate Mg(2+). Tyr-143 contacts substrate.

The protein belongs to the PPase family. As to quaternary structure, homohexamer. Mg(2+) serves as cofactor.

It is found in the cytoplasm. It catalyses the reaction diphosphate + H2O = 2 phosphate + H(+). In terms of biological role, catalyzes the hydrolysis of inorganic pyrophosphate (PPi) forming two phosphate ions. This Wigglesworthia glossinidia brevipalpis protein is Inorganic pyrophosphatase.